The sequence spans 38 residues: Glutathione S-transferase 2 (38 aa).

The protein belongs to the GST superfamily. Phi family.

It catalyses the reaction RX + glutathione = an S-substituted glutathione + a halide anion + H(+). In terms of biological role, conjugation of reduced glutathione to a wide number of exogenous and endogenous hydrophobic electrophiles. In plants, may have a detoxification role against certain herbicides. The chain is Glutathione S-transferase 2 from Populus euphratica (Euphrates poplar).